Reading from the N-terminus, the 258-residue chain is Ribosomal RNA small subunit methyltransferase J (258 aa).

Residues 106 to 107 (RD), 122 to 123 (ER), and Asp-181 contribute to the S-adenosyl-L-methionine site.

Belongs to the methyltransferase superfamily. RsmJ family.

The protein resides in the cytoplasm. The enzyme catalyses guanosine(1516) in 16S rRNA + S-adenosyl-L-methionine = N(2)-methylguanosine(1516) in 16S rRNA + S-adenosyl-L-homocysteine + H(+). Functionally, specifically methylates the guanosine in position 1516 of 16S rRNA. The polypeptide is Ribosomal RNA small subunit methyltransferase J (Pseudoalteromonas atlantica (strain T6c / ATCC BAA-1087)).